The chain runs to 758 residues: Meiotic driver SPOK4 (758 aa).

The stretch at 4-41 forms a coiled coil; sequence KDRITQLLRKLEEAKAREEEAKAREAQERCEKERLQLE. Disordered stretches follow at residues 180-230 and 414-499; these read ELTQ…GVGI and LSSA…MADP. Basic and acidic residues predominate over residues 181 to 190; that stretch reads LTQEDDRSSG. Polar residues predominate over residues 416–429; it reads SAASSQNTENSEYT. Residues 457 to 468 show a composition bias toward basic and acidic residues; it reads NEHDEHDEDHSE.

Its subcellular location is the cytoplasm. The protein localises to the nucleus. Promotes unequal transmission of alleles from the parental zygote to progeny spores by acting as poison/antidote system, leading to poisoning of progeny that do not inherit the allele. May possess DNA nuclease activity that leads to spore killing, and a kinase activity that confers resistance to the nuclease activity. Can suppress meiotic drive by the P.comata SPOK1 protein. This is Meiotic driver SPOK4 from Podospora anserina (Pleurage anserina).